Consider the following 404-residue polypeptide: Cysteine desulfurase IscS (404 aa).

Residues 75–76 (AT), Asn155, Gln183, and 203–205 (SAH) contribute to the pyridoxal 5'-phosphate site. Lys206 carries the post-translational modification N6-(pyridoxal phosphate)lysine. Thr243 provides a ligand contact to pyridoxal 5'-phosphate. The active-site Cysteine persulfide intermediate is the Cys328. Cys328 is a [2Fe-2S] cluster binding site.

Belongs to the class-V pyridoxal-phosphate-dependent aminotransferase family. NifS/IscS subfamily. Homodimer. Forms a heterotetramer with IscU, interacts with other sulfur acceptors. Pyridoxal 5'-phosphate is required as a cofactor.

The protein resides in the cytoplasm. It carries out the reaction (sulfur carrier)-H + L-cysteine = (sulfur carrier)-SH + L-alanine. Its pathway is cofactor biosynthesis; iron-sulfur cluster biosynthesis. Master enzyme that delivers sulfur to a number of partners involved in Fe-S cluster assembly, tRNA modification or cofactor biosynthesis. Catalyzes the removal of elemental sulfur atoms from cysteine to produce alanine. Functions as a sulfur delivery protein for Fe-S cluster synthesis onto IscU, an Fe-S scaffold assembly protein, as well as other S acceptor proteins. In Azotobacter vinelandii (strain DJ / ATCC BAA-1303), this protein is Cysteine desulfurase IscS.